Consider the following 367-residue polypeptide: Protein SUPPRESSOR OF FRI 4 (367 aa).

The segment at 7–66 (RATEKVWCYYCDREFDDEKILVQHQKAKHFKCHVCHKKLSTASGMVIHVLQVHKENVTKV) adopts a BED-type zinc-finger fold. Residues C38, C41, H54, and H59 each coordinate Zn(2+). Residues 246-309 (PFSAPLPVGG…PPVIANKAPS (64 aa)) form a disordered region. Over residues 273–295 (PNNSIPGGTNAHSYASGPNTSGP) the composition is skewed to polar residues.

Homodimer. Component of the transcription activator complex FRI-C composed of FRI, FRL1, SUF4, FLX and FES1. Interacts with LD, ASHH2, FRL1, (via C-terminus) with FRI (via C-terminus), and with SWC6, a component of the SWR1 chromatin-remodeling complex. Binds to MED18 to regulate flowering time; recruits MED18 to FLC promoter. Expressed in root, shoot apex, leaves, stem and flowers. Expressed in expanding leaves, in the vasculature of fully expanded leaves, in the inflorescence, throughout young floral primordia, in the carpels of older flowers and in fertilized ovules.

It localises to the nucleus. In terms of biological role, sequence-specific DNA binding factor that recognizes the 5'-CCAAATTTTAAGTTT-3' sequence. Recruits the FRI-C complex to the FLC promoter. Required for FRI-mediated FLC activation, but has no effect on the expression of MAF1, MAF2, MAF3, MAF5, UFC and CO. Dispensable for the reactivation of FLC in early embryogenesis, but required to maintain high levels of FLC expression in later embryonic and vegetative development. The polypeptide is Protein SUPPRESSOR OF FRI 4 (Arabidopsis thaliana (Mouse-ear cress)).